Reading from the N-terminus, the 393-residue chain is S-adenosylmethionine synthase (393 aa).

Glutamate 9 provides a ligand contact to Mg(2+). Histidine 15 is an ATP binding site. Glutamate 43 lines the K(+) pocket. 2 residues coordinate L-methionine: glutamate 56 and glutamine 99. ATP is bound by residues 167-169 (DGK), 235-238 (SGRF), aspartate 246, 252-253 (RK), alanine 269, lysine 273, and lysine 277. Position 246 (aspartate 246) interacts with L-methionine. Lysine 277 lines the L-methionine pocket.

This sequence belongs to the AdoMet synthase family. In terms of assembly, homotetramer. It depends on Mn(2+) as a cofactor. Mg(2+) is required as a cofactor. Co(2+) serves as cofactor. Requires K(+) as cofactor.

It localises to the cytoplasm. It catalyses the reaction L-methionine + ATP + H2O = S-adenosyl-L-methionine + phosphate + diphosphate. It participates in amino-acid biosynthesis; S-adenosyl-L-methionine biosynthesis; S-adenosyl-L-methionine from L-methionine: step 1/1. Catalyzes the formation of S-adenosylmethionine from methionine and ATP. The reaction comprises two steps that are both catalyzed by the same enzyme: formation of S-adenosylmethionine (AdoMet) and triphosphate, and subsequent hydrolysis of the triphosphate. The protein is S-adenosylmethionine synthase (SAM) of Camellia sinensis (Tea plant).